Here is a 389-residue protein sequence, read N- to C-terminus: Equilibrative nucleotide transporter 8 (389 aa).

The next 10 helical transmembrane spans lie at 19-39, 57-77, 87-107, 119-139, 150-170, 187-207, 238-258, 266-286, 331-351, and 367-387; these read VAYV…NALI, TFTV…MTWN, NLGF…DWVW, LMVG…GSLI, MQAI…LRIA, HSYF…CNVL, WPAS…PGFI, LLQS…DFVG, VVVL…VLMI, and IFMV…GWLW.

Belongs to the SLC29A/ENT transporter (TC 2.A.57) family. As to expression, expressed in stems, flowers and siliques.

The protein localises to the cell membrane. Its function is as follows. May be involved in nucleoside transport. This chain is Equilibrative nucleotide transporter 8 (ETN8), found in Arabidopsis thaliana (Mouse-ear cress).